The primary structure comprises 500 residues: Pyridine nucleotide-disulfide oxidoreductase domain-containing protein 1 (500 aa).

An N-acetylmethionine modification is found at Met-1. A disordered region spans residues 211–235 (TRYTTEGRKKEARSKSKADNVGSAL). Residues 213 to 228 (YTTEGRKKEARSKSKA) show a composition bias toward basic and acidic residues.

This sequence belongs to the class-I pyridine nucleotide-disulfide oxidoreductase family. PYROXD1 subfamily. FAD serves as cofactor.

It localises to the nucleus. The protein resides in the cytoplasm. Its subcellular location is the myofibril. It is found in the sarcomere. In terms of biological role, probable FAD-dependent oxidoreductase; involved in the cellular oxidative stress response. Required for normal sarcomere structure and muscle fiber integrity. This is Pyridine nucleotide-disulfide oxidoreductase domain-containing protein 1 (PYROXD1) from Homo sapiens (Human).